We begin with the raw amino-acid sequence, 206 residues long: Max dimerization protein 3 (206 aa).

The tract at residues I8–A25 is interaction with SIN3A and SIN3B. One can recognise a bHLH domain in the interval S57–L109.

In terms of assembly, efficient DNA binding requires dimerization with another bHLH protein. Binds DNA as a heterodimer with MAX. Interacts with SIN3A AND SIN3B. Interacts with RNF17.

It localises to the nucleus. In terms of biological role, transcriptional repressor. Binds with MAX to form a sequence-specific DNA-binding protein complex which recognizes the core sequence 5'-CAC[GA]TG-3'. Antagonizes MYC transcriptional activity by competing for MAX and suppresses MYC dependent cell transformation. This chain is Max dimerization protein 3 (Mxd3), found in Rattus norvegicus (Rat).